The sequence spans 299 residues: Bifunctional methyltransferase-like/endonuclease (299 aa).

Residues 1–80 (MLSSKLLDIN…NLIVSPMQKA (80 aa)) are probable methylated-DNA--protein-cysteine methyltransferase-like. An endonuclease V region spans residues 81–299 (LLEKEVKIIG…GRGDSNPGRD (219 aa)). Mg(2+) contacts are provided by Asp-135 and Asn-197.

In the N-terminal section; belongs to the MGMT family. It in the C-terminal section; belongs to the endonuclease V family. Mg(2+) is required as a cofactor.

The protein resides in the cytoplasm. It catalyses the reaction Endonucleolytic cleavage at apurinic or apyrimidinic sites to products with a 5'-phosphate.. In terms of biological role, DNA repair enzyme involved in the repair of deaminated bases. Selectively cleaves double-stranded DNA at the second phosphodiester bond 3' to a deoxyinosine leaving behind the intact lesion on the nicked DNA. In Nanoarchaeum equitans (strain Kin4-M), this protein is Bifunctional methyltransferase-like/endonuclease.